A 470-amino-acid polypeptide reads, in one-letter code: Poly(A) polymerase catalytic subunit (470 aa).

Active-site residues include Asp192 and Asp194.

This sequence belongs to the poxviridae poly(A) polymerase catalytic subunit family. Heterodimer of a large (catalytic) subunit and a small (regulatory) subunit.

The catalysed reaction is RNA(n) + ATP = RNA(n)-3'-adenine ribonucleotide + diphosphate. In terms of biological role, polymerase that creates the 3'-poly(A) tail of mRNA's. This is Poly(A) polymerase catalytic subunit (PAPL) from Homo sapiens (Human).